Here is a 1117-residue protein sequence, read N- to C-terminus: MKKASRSVGSVPKVSAISKTQTAEKIKPENSSSASTGGKLVKPGTAASLSKTKSSDDLLAGMAGGVTVTNGVKGKKSTCPSAAPSASAPAMTTVENKSKISTGTASSTKRNTSTGNKESSSTRERLRERTRLNQSKKLPSAGQGANDMALAKRSRSRTATECDVRMSKSKSDNQISDRAALEAKVKDLLTLAKTKDVEILHLRNELRDMRAQLGINEDHSEGDEKSEKETIMAHQPTDVESTLLQLQEQNTAIREELNQLKNENRMLKDRLNALGFSLEQRLDNSEKLFGYQSLSPEITPGNQSDGGGTLTSSVEGSAPGSVEDLLSQDENTLMDHQHSNSMDNLDSECSEVYQPLTSSDDALDAPSSSESEGIPSIERSRKGSSGNASEVSVACLTERIHQMEENQHSTSEELQATLQELADLQQITQELNSENERLGEEKVILMESLCQQSDKLEHFSRQIEYFRSLLDEHHISYVIDEDVKSGRYMELEQRYMDLAENARFEREQLLGVQQHLSNTLKMAEQDNKEAQEMIGALKERSHHMERIIESEQKGKAALAATLEEYKATVASDQIEMNRLKAQLENEKQKVAELYSIHNSGDKSDIQDLLESVRLDKEKAETLASSLQEDLAHTRNDANRLQDAIAKVEDEYRAFQEEAKKQIEDLNMTLEKLRSDLDEKETERSDMKETIFELEDEVEQHRAVKLHDNLIISDLENTVKKLQDQKHDMEREIKTLHRRLREESAEWRQFQADLQTAVVIANDIKSEAQEEIGDLKRRLHEAQEKNEKLTKELEEIKSRKQEEERGRVYNYMNAVERDLAALRQGMGLSRRSSTSSEPTPTVKTLIKSFDSASQVPNPAAAAIPRTPLSPSPMKTPPAAAVSPMQRHSISGPISTSKPLTALSDKRPNYGEIPVQEHLLRTSSASRPASLPRGPAMESAKTLSVSRRSSEEMKRDISAQEGASPASLMAMGTTSPQLSLSSSPTASVTPTTRSRIREERKDPLSALAREYGGSKRNALLKWCQKKTEGYQNIDITNFSSSWNDGLAFCALLHTYLPAHIPYQELNSQDKRRNFMLAFQAAESVGIKSTLDINEMVRTERPDWQNVMLYVTAIYKYFET.

3 disordered regions span residues 1-176 (MKKA…NQIS), 293-323 (SLSPEITPGNQSDGGGTLTSSVEGSAPGSVE), and 358-390 (SSDDALDAPSSSESEGIPSIERSRKGSSGNASE). Residues 45–90 (TAASLSKTKSSDDLLAGMAGGVTVTNGVKGKKSTCPSAAPSASAPA) show a composition bias toward low complexity. A compositionally biased stretch (polar residues) spans 93–117 (TVENKSKISTGTASSTKRNTSTGNK). 2 stretches are compositionally biased toward basic and acidic residues: residues 120-131 (SSTRERLRERTR) and 158-171 (TATECDVRMSKSKS). Positions 168–280 (KSKSDNQISD…LNALGFSLEQ (113 aa)) form a coiled coil. Positions 293–303 (SLSPEITPGNQ) are enriched in polar residues. Over residues 358-377 (SSDDALDAPSSSESEGIPSI) the composition is skewed to low complexity. Phosphoserine is present on residues serine 384, serine 385, and serine 389. 2 coiled-coil regions span residues 394–449 (ACLT…MESL) and 487–807 (RYME…RGRV). Residues serine 868, serine 881, and serine 887 each carry the phosphoserine modification. The tract at residues 919–1001 (RTSSASRPAS…SRIREERKDP (83 aa)) is disordered. Basic and acidic residues predominate over residues 946–956 (RSSEEMKRDIS). Positions 971-990 (TTSPQLSLSSSPTASVTPTT) are enriched in low complexity. The Calponin-homology (CH) domain maps to 1011 to 1116 (GSKRNALLKW…YVTAIYKYFE (106 aa)).

This sequence belongs to the cytospin-A family. In terms of assembly, may interact with both microtubules and actin cytoskeleton.

It localises to the cytoplasm. It is found in the cytoskeleton. The protein localises to the spindle. Its subcellular location is the cell junction. The protein resides in the gap junction. Its function is as follows. Involved in cytokinesis and spindle organization. May play a role in actin cytoskeleton organization and microtubule stabilization and hence required for proper cell adhesion and migration. In Pan troglodytes (Chimpanzee), this protein is Cytospin-A (SPECC1L).